The sequence spans 484 residues: Fumarate hydratase class II (484 aa).

Residues 1–22 (MPSILDLPIGTGATGKRKESDS) are disordered. Substrate-binding positions include 110-112 (SGT), 141-144 (HPND), 151-153 (SSN), and Thr199. Residue His200 is the Proton donor/acceptor of the active site. Residue Ser330 is part of the active site. Substrate-binding positions include Ser331 and 336 to 338 (KVN).

The protein belongs to the class-II fumarase/aspartase family. Fumarase subfamily. Homotetramer.

The protein resides in the cytoplasm. It catalyses the reaction (S)-malate = fumarate + H2O. The protein operates within carbohydrate metabolism; tricarboxylic acid cycle; (S)-malate from fumarate: step 1/1. Involved in the TCA cycle. Catalyzes the stereospecific interconversion of fumarate to L-malate. The chain is Fumarate hydratase class II from Methanosarcina acetivorans (strain ATCC 35395 / DSM 2834 / JCM 12185 / C2A).